We begin with the raw amino-acid sequence, 246 residues long: Small ribosomal subunit protein uS3 (246 aa).

Residues 19–98 form the KH type-2 domain; that stretch reads IDEWLAQNFY…NPMLDARVQA (80 aa). Residues 218-246 are disordered; sequence LQEETASTLREHMEAARPGEEHEEDREES. A compositionally biased stretch (basic and acidic residues) spans 226-237; it reads LREHMEAARPGE.

The protein belongs to the universal ribosomal protein uS3 family. As to quaternary structure, part of the 30S ribosomal subunit.

In terms of biological role, binds the lower part of the 30S subunit head. This is Small ribosomal subunit protein uS3 from Aeropyrum pernix (strain ATCC 700893 / DSM 11879 / JCM 9820 / NBRC 100138 / K1).